Here is a 417-residue protein sequence, read N- to C-terminus: NADH-quinone oxidoreductase subunit D (417 aa).

Belongs to the complex I 49 kDa subunit family. In terms of assembly, NDH-1 is composed of 14 different subunits. Subunits NuoB, C, D, E, F, and G constitute the peripheral sector of the complex.

The protein resides in the cell inner membrane. The enzyme catalyses a quinone + NADH + 5 H(+)(in) = a quinol + NAD(+) + 4 H(+)(out). Functionally, NDH-1 shuttles electrons from NADH, via FMN and iron-sulfur (Fe-S) centers, to quinones in the respiratory chain. The immediate electron acceptor for the enzyme in this species is believed to be ubiquinone. Couples the redox reaction to proton translocation (for every two electrons transferred, four hydrogen ions are translocated across the cytoplasmic membrane), and thus conserves the redox energy in a proton gradient. This chain is NADH-quinone oxidoreductase subunit D, found in Paraburkholderia phymatum (strain DSM 17167 / CIP 108236 / LMG 21445 / STM815) (Burkholderia phymatum).